Consider the following 96-residue polypeptide: U-scoloptoxin(06)-Sm1a (96 aa).

The signal sequence occupies residues 1–23; the sequence is MNSFSFFLVIFVVLNLQVAKLMA.

The protein belongs to the scoloptoxin-06 family. Post-translationally, contains 2 disulfide bonds. As to expression, expressed by the venom gland.

It is found in the secreted. The protein is U-scoloptoxin(06)-Sm1a of Scolopendra morsitans (Tanzanian blue ringleg centipede).